A 401-amino-acid polypeptide reads, in one-letter code: F-box protein At1g69090 (401 aa).

A disordered region spans residues 1–23; it reads MASPTLALAQSPPPKSPAVSVSQ. Residues 27–74 form the F-box domain; it reads HCWSKLPLDLMQLVFERLAFLDFERAKSVCSSWQFGSKQSKPNNQIPW.

This is F-box protein At1g69090 from Arabidopsis thaliana (Mouse-ear cress).